The following is a 202-amino-acid chain: Small ribosomal subunit protein uS4 (202 aa).

The S4 RNA-binding domain maps to arginine 93–valine 156.

This sequence belongs to the universal ribosomal protein uS4 family. As to quaternary structure, part of the 30S ribosomal subunit. Contacts protein S5. The interaction surface between S4 and S5 is involved in control of translational fidelity.

Functionally, one of the primary rRNA binding proteins, it binds directly to 16S rRNA where it nucleates assembly of the body of the 30S subunit. In terms of biological role, with S5 and S12 plays an important role in translational accuracy. The sequence is that of Small ribosomal subunit protein uS4 from Pediococcus pentosaceus (strain ATCC 25745 / CCUG 21536 / LMG 10740 / 183-1w).